Consider the following 395-residue polypeptide: Tyrosine--tRNA ligase (395 aa).

A 'HIGH' region motif is present at residues 42 to 51; the sequence is PTAPDIHLGH. The 'KMSKS' region signature appears at 226 to 230; sequence KMSKS. Lys-229 contacts ATP. The S4 RNA-binding domain occupies 334-394; sequence IGLATLLKEA…GKRKFARVTV (61 aa).

It belongs to the class-I aminoacyl-tRNA synthetase family. TyrS type 2 subfamily. As to quaternary structure, homodimer.

It localises to the cytoplasm. The catalysed reaction is tRNA(Tyr) + L-tyrosine + ATP = L-tyrosyl-tRNA(Tyr) + AMP + diphosphate + H(+). In terms of biological role, catalyzes the attachment of tyrosine to tRNA(Tyr) in a two-step reaction: tyrosine is first activated by ATP to form Tyr-AMP and then transferred to the acceptor end of tRNA(Tyr). This is Tyrosine--tRNA ligase from Haemophilus influenzae (strain 86-028NP).